Here is a 587-residue protein sequence, read N- to C-terminus: Protein IQ-DOMAIN 31 (587 aa).

Positions 57–80 are disordered; that stretch reads ETNTVDRSGGMLETQNVGPEEISD. S79 is subject to Phosphoserine. 3 consecutive IQ domains span residues 112–140, 141–163, and 164–188; these read REIA…GIIR, LQAL…SVMG, and IVRL…VYRK. A calmodulin-binding region spans residues 149–159; it reads LVRRQAVATLF. A Nuclear localization signal motif is present at residues 176–183; the sequence is IRKSDIGV. The interval 344-587 is disordered; it reads NPVVESSIQP…AKTTPAERKR (244 aa). Basic and acidic residues-rich tracts occupy residues 357–373 and 390–413; these read PRKE…KTRE and CDEK…EMEV. Residues 424-434 show a composition bias toward polar residues; that stretch reads ALDSSLVNQID. Basic and acidic residues-rich tracts occupy residues 435–472 and 482–494; these read SNEK…ENQK and KTER…HHET. Polar residues-rich tracts occupy residues 495-506 and 544-561; these read SPSIPSYMQATK and RITS…SGDK.

Belongs to the IQD family. Binds to multiple calmodulin (CaM) in the presence of Ca(2+) and CaM-like proteins.

Its subcellular location is the nucleus. The protein localises to the nucleus envelope. The protein resides in the cytoplasm. It is found in the cytoskeleton. It localises to the cell membrane. Functionally, may be involved in cooperative interactions with calmodulins or calmodulin-like proteins. Recruits calmodulin proteins to microtubules, thus being a potential scaffold in cellular signaling and trafficking. May associate with nucleic acids and regulate gene expression at the transcriptional or post-transcriptional level. The chain is Protein IQ-DOMAIN 31 from Arabidopsis thaliana (Mouse-ear cress).